The following is a 439-amino-acid chain: tRNA-2-methylthio-N(6)-dimethylallyladenosine synthase (439 aa).

Residues 2–119 (KKLYLKTHGC…LPDLLDSVIQ (118 aa)) form the MTTase N-terminal domain. The [4Fe-4S] cluster site is built by cysteine 11, cysteine 48, cysteine 82, cysteine 156, cysteine 160, and cysteine 163. Positions 142 to 374 (RAEGPSAFVS…QNRINAKAAE (233 aa)) constitute a Radical SAM core domain. The 63-residue stretch at 377–439 (QSMVGTQQRI…RPYSLWGEIC (63 aa)) folds into the TRAM domain.

The protein belongs to the methylthiotransferase family. MiaB subfamily. As to quaternary structure, monomer. [4Fe-4S] cluster is required as a cofactor.

The protein localises to the cytoplasm. It catalyses the reaction N(6)-dimethylallyladenosine(37) in tRNA + (sulfur carrier)-SH + AH2 + 2 S-adenosyl-L-methionine = 2-methylsulfanyl-N(6)-dimethylallyladenosine(37) in tRNA + (sulfur carrier)-H + 5'-deoxyadenosine + L-methionine + A + S-adenosyl-L-homocysteine + 2 H(+). Its function is as follows. Catalyzes the methylthiolation of N6-(dimethylallyl)adenosine (i(6)A), leading to the formation of 2-methylthio-N6-(dimethylallyl)adenosine (ms(2)i(6)A) at position 37 in tRNAs that read codons beginning with uridine. This chain is tRNA-2-methylthio-N(6)-dimethylallyladenosine synthase, found in Coxiella burnetii (strain CbuK_Q154) (Coxiella burnetii (strain Q154)).